The following is a 153-amino-acid chain: Deoxyuridine 5'-triphosphate nucleotidohydrolase (153 aa).

Substrate is bound by residues 71–73 (RSG), Asn84, 88–90 (TID), and Lys98.

The protein belongs to the dUTPase family. Mg(2+) is required as a cofactor.

The catalysed reaction is dUTP + H2O = dUMP + diphosphate + H(+). It participates in pyrimidine metabolism; dUMP biosynthesis; dUMP from dCTP (dUTP route): step 2/2. Functionally, this enzyme is involved in nucleotide metabolism: it produces dUMP, the immediate precursor of thymidine nucleotides and it decreases the intracellular concentration of dUTP so that uracil cannot be incorporated into DNA. In Wolbachia pipientis wMel, this protein is Deoxyuridine 5'-triphosphate nucleotidohydrolase.